Reading from the N-terminus, the 176-residue chain is Small capsomere-interacting protein (176 aa).

Disordered stretches follow at residues 75–109 (DKRQ…ASAG) and 148–176 (ASAA…RKKQ). A compositionally biased stretch (low complexity) spans 80–109 (ASVAGAGAHAHLGGSSATPVQQAQAAASAG).

It belongs to the herpesviridae small capsomere-interacting protein family. In terms of assembly, interacts with the major capsid protein/MCP.

Its subcellular location is the virion. It is found in the host nucleus. Functionally, participates in the assembly of the infectious particles by decorating the outer surface of the capsid shell and thus forming a layer between the capsid and the tegument. Complexes composed of the major capsid protein and small capsomere-interacting protein/SCP assemble together in the host cytoplasm and are translocated to the nucleus, where they accumulate and participate in capsid assembly. This Epstein-Barr virus (strain B95-8) (HHV-4) protein is Small capsomere-interacting protein.